A 142-amino-acid chain; its full sequence is Large ribosomal subunit protein uL13 (142 aa).

It belongs to the universal ribosomal protein uL13 family. Part of the 50S ribosomal subunit.

Its function is as follows. This protein is one of the early assembly proteins of the 50S ribosomal subunit, although it is not seen to bind rRNA by itself. It is important during the early stages of 50S assembly. In Marinomonas sp. (strain MWYL1), this protein is Large ribosomal subunit protein uL13.